Reading from the N-terminus, the 135-residue chain is Large ribosomal subunit protein uL16c (135 aa).

Belongs to the universal ribosomal protein uL16 family. Part of the 50S ribosomal subunit.

It is found in the plastid. The protein resides in the chloroplast. The chain is Large ribosomal subunit protein uL16c from Piper cenocladum (Ant piper).